A 307-amino-acid chain; its full sequence is Protease HtpX homolog 1 (307 aa).

The next 2 helical transmembrane spans lie at 7 to 27 and 38 to 60; these read LKTLMFLSGTLTIIAEGIITY and IFTAIFLVILWLIQWLIAPYLVG. Residue H133 coordinates Zn(2+). Residue E134 is part of the active site. Residue H137 participates in Zn(2+) binding. 2 consecutive transmembrane segments (helical) span residues 145 to 165 and 180 to 200; these read IGMALGLIPTIIGYVGNFLLF and LILGLAMLAIGGVLFVLTFLL. E212 lines the Zn(2+) pocket.

The protein belongs to the peptidase M48B family. Requires Zn(2+) as cofactor.

The protein resides in the cell membrane. This is Protease HtpX homolog 1 from Sulfolobus acidocaldarius (strain ATCC 33909 / DSM 639 / JCM 8929 / NBRC 15157 / NCIMB 11770).